The chain runs to 239 residues: Orotidine 5'-phosphate decarboxylase (239 aa).

Residues D12, K34, 61–70 (DLKFHDIPNT), T125, R188, Q197, G217, and R218 each bind substrate. K63 functions as the Proton donor in the catalytic mechanism.

Belongs to the OMP decarboxylase family. Type 1 subfamily. In terms of assembly, homodimer.

It carries out the reaction orotidine 5'-phosphate + H(+) = UMP + CO2. It functions in the pathway pyrimidine metabolism; UMP biosynthesis via de novo pathway; UMP from orotate: step 2/2. Functionally, catalyzes the decarboxylation of orotidine 5'-monophosphate (OMP) to uridine 5'-monophosphate (UMP). The sequence is that of Orotidine 5'-phosphate decarboxylase from Syntrophomonas wolfei subsp. wolfei (strain DSM 2245B / Goettingen).